Reading from the N-terminus, the 380-residue chain is MSKQIIYPGAVIGIIGGGQLGKMMAVSAKQMGYKVAVVDPVKDSPCGQVADVEITAHYNDREAIRKLAEISDIITYEFENIDYDALHWLKDHAYLPQGSELLLITQNRETEKKAIQSAGCEVAPYSIVKTKNELKQAVQELRLPAVLKTCRGGYDGKGQFVIKEEAQMEQAAALLEHGTCILESWVSFKMELSVIVVRSVNGEISTFPTAENIHHNNILFQSIVPARVEKGIQQKAADLAVKLADELNLVGPLAVEMFLTEDGELLVNELAPRPHNSGHYTLDLCETSQFEQHIRAVCGLPLGKTDLLKPGMMVNLLGDEVKLVEEDPELLKEAKLYIYGKHEIKKGRKMGHITFMKQPEDEWIQEITNKWMNRDGGQAE.

ATP-binding positions include arginine 108, lysine 148, 153–159 (GYDGKGQ), 183–186 (ESWV), glutamate 191, histidine 214, and 268–269 (NE). The ATP-grasp domain maps to 112–298 (KKAIQSAGCE…QFEQHIRAVC (187 aa)).

This sequence belongs to the PurK/PurT family. Homodimer.

The enzyme catalyses 5-amino-1-(5-phospho-beta-D-ribosyl)imidazole + hydrogencarbonate + ATP = 5-carboxyamino-1-(5-phospho-D-ribosyl)imidazole + ADP + phosphate + 2 H(+). The protein operates within purine metabolism; IMP biosynthesis via de novo pathway; 5-amino-1-(5-phospho-D-ribosyl)imidazole-4-carboxylate from 5-amino-1-(5-phospho-D-ribosyl)imidazole (N5-CAIR route): step 1/2. Catalyzes the ATP-dependent conversion of 5-aminoimidazole ribonucleotide (AIR) and HCO(3)(-) to N5-carboxyaminoimidazole ribonucleotide (N5-CAIR). This is N5-carboxyaminoimidazole ribonucleotide synthase from Bacillus subtilis (strain 168).